Reading from the N-terminus, the 449-residue chain is Glucose-6-phosphate isomerase (449 aa).

Glutamate 291 functions as the Proton donor in the catalytic mechanism. Catalysis depends on residues histidine 312 and lysine 426.

This sequence belongs to the GPI family.

The protein localises to the cytoplasm. It carries out the reaction alpha-D-glucose 6-phosphate = beta-D-fructose 6-phosphate. The protein operates within carbohydrate biosynthesis; gluconeogenesis. It participates in carbohydrate degradation; glycolysis; D-glyceraldehyde 3-phosphate and glycerone phosphate from D-glucose: step 2/4. Its function is as follows. Catalyzes the reversible isomerization of glucose-6-phosphate to fructose-6-phosphate. In Streptococcus pneumoniae (strain CGSP14), this protein is Glucose-6-phosphate isomerase.